A 313-amino-acid polypeptide reads, in one-letter code: Ribosomal protein L11 methyltransferase (313 aa).

Residues threonine 164, glycine 185, aspartate 207, and asparagine 249 each contribute to the S-adenosyl-L-methionine site.

This sequence belongs to the methyltransferase superfamily. PrmA family.

The protein localises to the cytoplasm. The catalysed reaction is L-lysyl-[protein] + 3 S-adenosyl-L-methionine = N(6),N(6),N(6)-trimethyl-L-lysyl-[protein] + 3 S-adenosyl-L-homocysteine + 3 H(+). Its function is as follows. Methylates ribosomal protein L11. The chain is Ribosomal protein L11 methyltransferase from Clostridium perfringens (strain 13 / Type A).